The chain runs to 1068 residues: Disheveled-associated activator of morphogenesis 2 (1068 aa).

One can recognise a GBD/FH3 domain in the interval 40-416 (SPIPNAEELN…QIVLQDERGV (377 aa)). Residues 434–516 (MLINENEVKQ…LVAQLSELST (83 aa)) adopt a coiled-coil conformation. Residues 514–586 (LSTGPVSSPP…MGLPLPQDPY (73 aa)) form a disordered region. Residues 518–594 (PVSSPPPPGG…PYPSSDVPLR (77 aa)) form the FH1 domain. The segment covering 540–572 (LPPPPPPLPFACCPPPPPPPLPPGGPPTPPGAP) has biased composition (pro residues). An FH2 domain is found at 595 to 994 (KKRVPQPSHP…EERRARMEAM (400 aa)). Residue S1015 is modified to Phosphoserine. The DAD domain maps to 1016-1048 (SLEEGGEFDDLVSALRSGEVFDKDLCKLKRSRK).

This sequence belongs to the formin homology family. Interacts with DVL3. Interacts with INF2. Expressed in most tissues examined. Expressed in kidney glomeruli.

Functionally, key regulator of the Wnt signaling pathway, which is required for various processes during development, such as dorsal patterning, determination of left/right symmetry or myelination in the central nervous system. Acts downstream of Wnt ligands and upstream of beta-catenin (CTNNB1). Required for canonical Wnt signaling pathway during patterning in the dorsal spinal cord by promoting the aggregation of Disheveled (Dvl) complexes, thereby clustering and formation of Wnt receptor signalosomes and potentiating Wnt activity. During dorsal patterning of the spinal cord, inhibits oligodendrocytes differentiation via interaction with PIP5K1A. Also regulates non-canonical Wnt signaling pathway. Acts downstream of PITX2 in the developing gut and is required for left/right asymmetry within dorsal mesentery: affects mesenchymal condensation by lengthening cadherin-based junctions through WNT5A and non-canonical Wnt signaling, inducing polarized condensation in the left dorsal mesentery necessary to initiate gut rotation. Together with DAAM1, required for myocardial maturation and sarcomere assembly. Is a regulator of actin nucleation and elongation, filopodia formation and podocyte migration. In Homo sapiens (Human), this protein is Disheveled-associated activator of morphogenesis 2.